The chain runs to 130 residues: Small ribosomal subunit protein uS11 (130 aa).

Belongs to the universal ribosomal protein uS11 family. As to quaternary structure, part of the 30S ribosomal subunit. Interacts with proteins S7 and S18. Binds to IF-3.

Its function is as follows. Located on the platform of the 30S subunit, it bridges several disparate RNA helices of the 16S rRNA. Forms part of the Shine-Dalgarno cleft in the 70S ribosome. The polypeptide is Small ribosomal subunit protein uS11 (Nitrobacter hamburgensis (strain DSM 10229 / NCIMB 13809 / X14)).